A 1060-amino-acid chain; its full sequence is Anoctamin-8 (1060 aa).

The segment at 1 to 32 (MAEAASGAGDVTLEGERGKRPPPEGEPAAPAS) is disordered. Residue Ala2 is modified to N-acetylalanine. Over 2 to 244 (AEAASGAGDV…DDICDYFGVK (243 aa)) the chain is Cytoplasmic. The span at 14–23 (EGERGKRPPP) shows a compositional bias: basic and acidic residues. A helical transmembrane segment spans residues 245 to 265 (IAMYFAWLGFYTSAMVYPAVF). Topologically, residues 266 to 281 (GSVLYTFTEADQTSRD) are extracellular. The helical transmembrane segment at 282–302 (VSCVVFALFNVIWSTLFLEEW) threads the bilayer. Residues 303–356 (KRRGAELAYKWGTLDSPGEAVEEPRPQFRGIRRISPITRAEEFYYPPWKRLLFQ) lie on the Cytoplasmic side of the membrane. Ser318 carries the phosphoserine modification. The chain crosses the membrane as a helical span at residues 357–377 (LLVSLPLCLACLICVFILMLG). Residues 378–400 (CFQLQELVLSVKGLPRLVRFLPK) lie on the Extracellular side of the membrane. Residues 401 to 421 (VMLALLVSVSAEGYKKLAVWL) traverse the membrane as a helical segment. The Cytoplasmic portion of the chain corresponds to 422–437 (NDMENYRLESTYERHL). The helical transmembrane segment at 438–458 (IIKVVLFQFVNSYLSLFYIGF) threads the bilayer. At 459–745 (YLKDMDRLKE…YEDTFQDYQE (287 aa)) the chain is on the extracellular side. Disordered regions lie at residues 529–605 (AQAD…SLLD), 619–640 (GAGRRRPGPSPDGLLEEGSPTM), 653–672 (AEEDDEPEGPPGSPGPEPQT), and 680–723 (GEGR…HSPQ). The segment covering 534-547 (GGAGSRRCLGGGCG) has biased composition (gly residues). 2 stretches are compositionally biased toward acidic residues: residues 549 to 559 (PEEENEEEEEA) and 581 to 602 (EEDEEEDDDEDEDEEYEGEEGS). At Ser665 the chain carries Phosphoserine. Residues 680-694 (GEGRDQGPDGDRDTE) are compositionally biased toward basic and acidic residues. The N-linked (GlcNAc...) asparagine glycan is linked to Asn708. The helical transmembrane segment at 746–766 (MFVQFGYVVLFSSAFPLAALC) threads the bilayer. The Cytoplasmic portion of the chain corresponds to 767–802 (ALVNNLIEIRSDAFKLCTGLQRPFGRRVESIGQWQK). Ser796 bears the Phosphoserine mark. Residues 803 to 823 (VMEAMGVLAIVVNCYLIGQCG) traverse the membrane as a helical segment. The Extracellular segment spans residues 824–836 (QLQRLFPWLSPEA). The helical transmembrane segment at 837-857 (AIVSVVVLEHLALLVKYLIHV) threads the bilayer. Over 858 to 1060 (AIPDIPGWVA…PRPEDAGHRP (203 aa)) the chain is Cytoplasmic. Residues 884–1060 (HERQAQQRFQ…PRPEDAGHRP (177 aa)) form a disordered region. Basic and acidic residues-rich tracts occupy residues 899 to 927 (RREEEERQRHAEQQARRERDTGGREEARA) and 935 to 950 (VAERGAAKAKGSERPR). Residues 972–986 (TRPPAPTGCAPPPRS) are compositionally biased toward pro residues. Arg991 bears the Asymmetric dimethylarginine; alternate mark. Omega-N-methylarginine; alternate is present on Arg991. Arg999 is subject to Omega-N-methylarginine. Residues 1049–1060 (PEPRPEDAGHRP) are compositionally biased toward basic and acidic residues.

It belongs to the anoctamin family. In terms of tissue distribution, predominant expression seen in epithelial tissues.

Its subcellular location is the cell membrane. In terms of biological role, does not exhibit calcium-activated chloride channel (CaCC) activity. The polypeptide is Anoctamin-8 (Ano8) (Mus musculus (Mouse)).